The primary structure comprises 329 residues: MKRSAYHEPVLAAQVTDFLVLRPGIYIDGTLGGGGHALAIMRALETAGFEKNSLLIGIDQDDEALHAASTTLSWYKETTVLVKGNFSDVRSILGKVCKQRGLVSRAAGILLDLGVSSSQIDTAGRGFSYLQKGPLDMRMDRCSSTTAADIVNTLDEKELAGLFFRYGEEPRSRMIARHIVNYREQTGAVTGTEVLAAIIRNAERDPHKQIKTLSRVFQALRIEVNQELEVLKQALSDGVDCLDYHGRMAVISYHSLEDRIVKSFFVEKSKSDWGPKGVGMREPLHKGVLGLVTRKPLIADEKEIQENPRARSAKLRVVENVATGGSHAE.

S-adenosyl-L-methionine contacts are provided by residues 34–36, aspartate 59, phenylalanine 86, aspartate 112, and glutamine 119; that span reads GGH.

It belongs to the methyltransferase superfamily. RsmH family.

Its subcellular location is the cytoplasm. The catalysed reaction is cytidine(1402) in 16S rRNA + S-adenosyl-L-methionine = N(4)-methylcytidine(1402) in 16S rRNA + S-adenosyl-L-homocysteine + H(+). Functionally, specifically methylates the N4 position of cytidine in position 1402 (C1402) of 16S rRNA. The chain is Ribosomal RNA small subunit methyltransferase H from Chlorobium phaeobacteroides (strain DSM 266 / SMG 266 / 2430).